The sequence spans 478 residues: 3-isopropylmalate dehydratase large subunit (478 aa).

[4Fe-4S] cluster-binding residues include Cys-347, Cys-407, and Cys-410.

The protein belongs to the aconitase/IPM isomerase family. LeuC type 1 subfamily. In terms of assembly, heterodimer of LeuC and LeuD. [4Fe-4S] cluster is required as a cofactor.

It carries out the reaction (2R,3S)-3-isopropylmalate = (2S)-2-isopropylmalate. It functions in the pathway amino-acid biosynthesis; L-leucine biosynthesis; L-leucine from 3-methyl-2-oxobutanoate: step 2/4. In terms of biological role, catalyzes the isomerization between 2-isopropylmalate and 3-isopropylmalate, via the formation of 2-isopropylmaleate. This is 3-isopropylmalate dehydratase large subunit from Prochlorococcus marinus (strain MIT 9313).